The chain runs to 272 residues: Phosphoglycolate phosphatase 1 (272 aa).

The active-site Nucleophile is Asp19. Mg(2+)-binding residues include Asp19, Asp21, and Asp182.

Belongs to the HAD-like hydrolase superfamily. CbbY/CbbZ/Gph/YieH family. The cofactor is Mg(2+).

It catalyses the reaction 2-phosphoglycolate + H2O = glycolate + phosphate. The protein operates within organic acid metabolism; glycolate biosynthesis; glycolate from 2-phosphoglycolate: step 1/1. Functionally, specifically catalyzes the dephosphorylation of 2-phosphoglycolate. Is involved in the dissimilation of the intracellular 2-phosphoglycolate formed during the DNA repair of 3'-phosphoglycolate ends, a major class of DNA lesions induced by oxidative stress. The sequence is that of Phosphoglycolate phosphatase 1 from Pseudomonas aeruginosa (strain ATCC 15692 / DSM 22644 / CIP 104116 / JCM 14847 / LMG 12228 / 1C / PRS 101 / PAO1).